Consider the following 240-residue polypeptide: 7-cyano-7-deazaguanine synthase (240 aa).

Position 18-28 (18-28) interacts with ATP; sequence FSGGQDSTTCL. The Zn(2+) site is built by cysteine 197, cysteine 206, cysteine 209, and cysteine 212.

The protein belongs to the QueC family. Zn(2+) serves as cofactor.

The catalysed reaction is 7-carboxy-7-deazaguanine + NH4(+) + ATP = 7-cyano-7-deazaguanine + ADP + phosphate + H2O + H(+). It participates in purine metabolism; 7-cyano-7-deazaguanine biosynthesis. Functionally, catalyzes the ATP-dependent conversion of 7-carboxy-7-deazaguanine (CDG) to 7-cyano-7-deazaguanine (preQ(0)). In Shewanella putrefaciens (strain CN-32 / ATCC BAA-453), this protein is 7-cyano-7-deazaguanine synthase.